The primary structure comprises 89 residues: Small ribosomal subunit protein uS15 (89 aa).

The protein belongs to the universal ribosomal protein uS15 family. In terms of assembly, part of the 30S ribosomal subunit. Forms a bridge to the 50S subunit in the 70S ribosome, contacting the 23S rRNA.

In terms of biological role, one of the primary rRNA binding proteins, it binds directly to 16S rRNA where it helps nucleate assembly of the platform of the 30S subunit by binding and bridging several RNA helices of the 16S rRNA. Functionally, forms an intersubunit bridge (bridge B4) with the 23S rRNA of the 50S subunit in the ribosome. This is Small ribosomal subunit protein uS15 from Proteus mirabilis (strain HI4320).